The chain runs to 311 residues: MVSTKTQIAGFEFDNCLMNAAGVACMTIEELEEVKNSAAGTFVTKTATLDFRQGNPEPRYQDVPLGSINSMGLPNNGLDYYLDYLLDLQEKESNRTFFLSLVGMSPEETHTILKKVQESDFRGLTELNLSCPNVPGKPQIAYDFETTDRILAEVFAYFTKPLGIKLPPYFDIVHFDQAAAIFNKYPLKFVNCVNSSGNGLYIEDESVVIRPKNGFGGIGGEYIKPTALANVHAFYQRLNPQIQIIGTGGVLTGRDAFEHILCGASMVQVGTTLHKEGVSAFDRITNELKAIMVEKGYESLEDFRGKLRYID.

Residues Lys-45, 69–73 (NSMGL), and Asn-128 each bind substrate. 45 to 46 (KT) contacts FMN. Asn-128 serves as a coordination point for FMN. Residue Cys-131 is the Nucleophile of the active site. Positions 165 and 193 each coordinate FMN. Position 194 to 195 (194 to 195 (NS)) interacts with substrate. Residues Gly-220, 248–249 (GG), and 270–271 (GT) each bind FMN.

Belongs to the dihydroorotate dehydrogenase family. Type 1 subfamily. Homodimer. It depends on FMN as a cofactor.

It localises to the cytoplasm. It catalyses the reaction (S)-dihydroorotate + fumarate = orotate + succinate. It participates in pyrimidine metabolism; UMP biosynthesis via de novo pathway. Catalyzes the conversion of dihydroorotate to orotate with fumarate as the electron acceptor. The polypeptide is Probable dihydroorotate dehydrogenase A (fumarate) (pyrDA) (Streptococcus pneumoniae (strain ATCC BAA-255 / R6)).